Here is a 218-residue protein sequence, read N- to C-terminus: Ribose-5-phosphate isomerase A (218 aa).

Residues 28-31 (TGST), 81-84 (DGAD), and 94-97 (KGGG) each bind substrate. Glutamate 103 acts as the Proton acceptor in catalysis. Lysine 121 serves as a coordination point for substrate.

It belongs to the ribose 5-phosphate isomerase family. Homodimer.

The catalysed reaction is aldehydo-D-ribose 5-phosphate = D-ribulose 5-phosphate. Its pathway is carbohydrate degradation; pentose phosphate pathway; D-ribose 5-phosphate from D-ribulose 5-phosphate (non-oxidative stage): step 1/1. In terms of biological role, catalyzes the reversible conversion of ribose-5-phosphate to ribulose 5-phosphate. This Alcanivorax borkumensis (strain ATCC 700651 / DSM 11573 / NCIMB 13689 / SK2) protein is Ribose-5-phosphate isomerase A.